The following is a 287-amino-acid chain: 2-dehydro-3-deoxyphosphooctonate aldolase (287 aa).

The protein belongs to the KdsA family.

It is found in the cytoplasm. The catalysed reaction is D-arabinose 5-phosphate + phosphoenolpyruvate + H2O = 3-deoxy-alpha-D-manno-2-octulosonate-8-phosphate + phosphate. The protein operates within carbohydrate biosynthesis; 3-deoxy-D-manno-octulosonate biosynthesis; 3-deoxy-D-manno-octulosonate from D-ribulose 5-phosphate: step 2/3. It functions in the pathway bacterial outer membrane biogenesis; lipopolysaccharide biosynthesis. This Rhodopseudomonas palustris (strain TIE-1) protein is 2-dehydro-3-deoxyphosphooctonate aldolase.